The sequence spans 334 residues: Methionine adenosyltransferase 2 subunit beta (334 aa).

NADP(+) contacts are provided by residues 37–40 (TGLL), 60–62 (FRR), 71–72 (NL), Cys-93, Arg-97, Tyr-159, and Leu-185. Thr-309 is modified (phosphothreonine). The required for interaction with MAT2A stretch occupies residues 319-334 (LWPFLIDKRWRQTVFH).

It belongs to the dTDP-4-dehydrorhamnose reductase family. MAT2B subfamily. In terms of assembly, heterotrimer; composed of a catalytic MAT2A homodimer that binds one regulatory MAT2B chain. Heterohexamer; composed of a central, catalytic MAT2A homotetramer flanked on either side by a regulatory MAT2B chain. NADP binding increases the affinity for MAT2A.

It participates in amino-acid biosynthesis; S-adenosyl-L-methionine biosynthesis; S-adenosyl-L-methionine from L-methionine: step 1/1. Regulatory subunit of S-adenosylmethionine synthetase 2, an enzyme that catalyzes the formation of S-adenosylmethionine from methionine and ATP. Regulates MAT2A catalytic activity by changing its kinetic properties, increasing its affinity for L-methionine. Can bind NADP (in vitro). The chain is Methionine adenosyltransferase 2 subunit beta (Mat2b) from Rattus norvegicus (Rat).